The following is a 234-amino-acid chain: Glucosamine-6-phosphate deaminase (234 aa).

Asp-63 acts as the Proton acceptor; for enolization step in catalysis. Asn-129 (for ring-opening step) is an active-site residue. The active-site Proton acceptor; for ring-opening step is the His-131. The active-site For ring-opening step is the Glu-136.

It belongs to the glucosamine/galactosamine-6-phosphate isomerase family. NagB subfamily.

It carries out the reaction alpha-D-glucosamine 6-phosphate + H2O = beta-D-fructose 6-phosphate + NH4(+). Its pathway is amino-sugar metabolism; N-acetylneuraminate degradation; D-fructose 6-phosphate from N-acetylneuraminate: step 5/5. Functionally, catalyzes the reversible isomerization-deamination of glucosamine 6-phosphate (GlcN6P) to form fructose 6-phosphate (Fru6P) and ammonium ion. This is Glucosamine-6-phosphate deaminase from Listeria innocua serovar 6a (strain ATCC BAA-680 / CLIP 11262).